A 320-amino-acid chain; its full sequence is Nodulation efficiency protein NfeD (320 aa).

The protein belongs to the ornithine cyclodeaminase/mu-crystallin family.

Functionally, seems to be involved in the nodulation efficiency of R.meliloti GR4 on alfalfa roots. This chain is Nodulation efficiency protein NfeD, found in Rhizobium meliloti (Ensifer meliloti).